The primary structure comprises 4466 residues: MGDVVDARLDFISEYILKSYKLKPDKWTKCINVEENKILMLEFLEKADNPQLVFTVNPAGLITPSYEFPSALKNTKAIYFIKKGREPVGKDNIKTNLVYGDLSYTPLEQLSALVDEVLVPLLANPRNHEQWPVVVSQDVLRHVHNLKSSVYVVAGQVKGKTLLPLPVGSEKVETAAGSEEKDDSYDRSLVHAIESVIIDWTHQIRDVLKRDSAQPLLEGLNPGPMVEINFWKAKCENLDCIFQQLRDPKVRKMKELLERTQSSYLPSFNNIERDVEAALTEAQDINIHLKPLVYQIESMDELEFSDLTPRLAPILHTVCLIWSNSDYYNTAPRVIVLLQEICNLLIDLCRTFLDPSEIFKLEPEESLEKVRGALTVLKNWRELYDEHRAKLKDYFKDGKEVKEWEFASPLVFTRMDNFIRRIETIQSLFETNVEFSKLEKTEMGSMKGRMLSQQVEKIHEEFQECAKVFTERPYDGLDPTCQEFLEDYEEFEKKVFDLDRRLGSILCQGFDDCCGLEAAFKMLDCYGPLLDRPVIRNDFECKYPIVLMLYDQELDQSKEIYDEHMRVEEANGNAPLNKNMPDVAGQLKWSAQLRDRISKPMGSLKHMEHPTGVRRILESEDAKVIFQKYEEMLNLLNKYEQKVFENWTKGVDEVCKTNLDQSLITRDDASKLIMVNFDPKLVSVLREVKYLQIRGEETIPESAASIYEKHETLRKYVANLDLTVAWYNKVRKTVLEVEFPLIEGQLADLDTRLRQAEADLNWTSDSVWEYIQETRDQVRDLEKRVQQTKDNVDRIKKIMAEWTKQPLFERKELKKESLLALDDRQDRLKKRYAEITTAGEKIHSLMKENLDLFKAEASSDIWKAYVDYVDDMVIDGFFNCIHCTLTYLLENTDPRHCAAPLFEARLELQVPDMIFNPSLDYGIADGFYDLVEMLISDTYKMASLVNRLAEHNGQEHYQADLEGMDDLSDVRNDLMDRVQTIMTKAQEYRNSFDNYAYLYVDDRKEFMRQFLLYNHVLTTEEIEAHAEDGVPECPPTLDQFKEQVDTYEKIYSEADEIEPEQVFDAWFRVDSKPFKAALLNIIKKWSFMFKQHLIDHVTNSLSELQEFIKVGNSGLTKTVEDGDYNGLVDCMGHLMAVKERQAATDEMFEPIKQTIELLKTYDQEMSEEVHTQLQELPEQWNNTKKIAITIKQQVAPLQANEVAIIRRKCTSFDVRQHEFRERFRKEAPFIFLFDGPYQCLDKCHSEIYEMEEHMAKLQESAGLFEVNMPDYKQLKACRREVRLLKGLWDLIMVVRTSIEDWKTTPWLEINVEQMEMDCKKFAKDIRSLDKEMRAWDAYNGLDATVKNMLTSLRAVSELQNPAIRERHWQQLMAATKVKFTMDKETTLSDLLALNLHNFEDEVRNIVDKAVKEMGMEKVLKELNTTWSSMDFDYEPHSRTGISLLKSNEELIETLEDNQVQLQNLMTSKHIAHFLEEVSGWQKKLSTTDSVITIWFEVQRTWSHLESIFIGSEDIRNQLPEDSKRFDGIDTDFKELAAEMEKTPNVVEATNKARLFDRLEAIQGSLVVCEKALAEYLETKRLAFPRFYFVSSADLLDILSQGNNPTQVQRHLSKLFDNMAKLKFKQDDEGNDTKLALGMYSKEGEYVDFDKECECTGQVEVWLNRVMDTMRSTVRSQFADAVVSYEEKPREQWLYDYPAQVALATTQVWWTTEVNISFARLEEGHENSMKDYNKKQILQLNTLIGLLIGKLTKGDRQKIMTICTIDVHARDVVAMMVLKKVDSAQAFQWLSQLRHRWADDDKHCYANICDAQFKYSYEYLGNTPRLVITPLTDRCYITLTQSLHLVMSGAPAGPAGTGKTETTKDLGRALGIMVYVFNCSEQMDYKSCGNIYKGLAQTGAWGCFDEFNRISVEVLSVVAVQVKCVQDAIRDKKERFNFMGEEISLIPSVGIFITMNPGYAGRTELPENLKALFRPCAMVVPDFELICEIMLVAEGFLEARLLARKFITLYTLCKELLSKQDHYDWGLRAIKSVLVVAGSLKRGDPQRPEDQVLMRALRDFNVPKIVSDDTPVFMGLIGDLFPALDVPRRRDLDFEKVVKQSTLDLKLQAEDSFVLKVVQLEELLAVRHSVFVIGNAGTGKSQVLKVLNKTYSNMKRKPVFIDLNPKAVTNDELFGIINPATREWKDGLFSVIMRDMSNITHDGPKWIVLDGDIDPMWIESLNTVMDDNKVLTLASNERIPLTPSMRLLFEISHLKTATPATVSRAGILYINPSDLGWNPIVTSWIDTREVQSERANLTILFDKYLPTLLDTLRIRFKKIIPIPEQSMVQMLCYLLECLLTPENTPADCPKELYELYFVFASIWAFGGSMFQDQLVDYRVEFSKWWITEFKTIKFPNQGTVFDYYIDQESKKFLPWSEKVPTFELDPEIPMQAVLVHTNETTRVRFFMDLLMERGRPVMLVGNAGLGKSVLVGDKLSNLGEDSMVANVPFNYYTTSEMLQRVLEKPLEKKAGRNYGPPGTKKLVYFIDDMNMPEVDTYGTVQPHTLIRQHMDYKHWYDRAKLTLKEIHKCQYVSCMNPTSGSFTINSRLQRHFCVFALSFPGQDALSTIYNSILSQHLANIAVSNALQKLSPTVVSATLDLHKKVAQSFLPTAIKFHYVFNLRDLSNVFQGLLYSGSDLLKSPIDFARLWMHECQRVYGDKMINDQDIEAFEKLVFEYAKKFFEDVDEEALKAKPNIHCHFATGIGDPKYMPCATWPELNKILVEALDTYNEINAVMNLVLFEDAMQHVCRINRILESPRGNALLVGVGGSGKQSLARLASYISSLEVFQITLRKGYGIPDLKLDLATVCMKAGLKNIGTVFLMTDAQVSDEKFLVLINDLLASGEIPDLFADDEVENIIGGVRNEVKGMGLQDTRENCWKFFIDRLRRQLKTVLCFSPVGTTLRVRSRKFPAVVNCTSIDWFHEWPQEALVSVSKRFLDEVELLKGDIKNSIAEFMAYVHVSVNESSKQYLTNERRYNYTTPKSFLEQIKLYESLLAMKSKELTAKMERLENGLTKLQSTAQQVDDLKAKLASQEVELAQKNEDADKLIQVVGVETEKVSKEKATVDDEEKKVAIINEEVSKKAKDCSEDLAKAEPALLAAQEALNTLNKNNLTELKSFGSPPSAVLKVAAAVMVLLAPNGKIPKDRSWKAAKVVMNKVDAFLDSLINYDEENIHENCQKAIKEYLNDPEFEPEYIKGKSLAAGGLCSWVVNIVKFYNVYCDVEPKRIALQKANDELKAAQDKLALIKAKIAELDANLAELTAQFEKATSDKLKCQQEAEATSRTITLANRLVGGLASENVRWGEAVANFKIQEKTLPGDVLLITAFVSYIGCFTKNYRVDLQDRMWLPFLKSQKDPIPITEGLDVLSMLTDDADIAVWNNEGLPSDRMSTENATILSNCQRWPLMIDPQLQGIKWIKQKYGDELRVIRIGQRGYLDTIENAISSGDTVLIENMEESIDPVLDPVLGRNTIKKGRYIKIGDKEVEYNPEFRLILQTKLANPHYKPEMQAQTTLINFTVTRDGLEDQLLANVVAQERPDLEKLKSDLTKQQNDFKIILKELEDNLLSRLSSAEGNFLGDTALVENLETTKRTAAEISVKVEEAKVTEVKINEARELYRPAAARASLLYFILNDLNKINPIYQFSLKAFNTVFSLSIARAEPCEDVKERVVNLIDCITYSVFIYTTRGLFEADKLIFTTQVAFQVLLMKKEIAQNELDFLLRFPIQVGLTSPVDFLTNSAWGAIKSLSAMEDFRNLDRDIEGSAKRWKKFVESECPEKEKFPQEWKNKSALQKLCMMRALRADRMSYAVRNFIEEKLGSKYVEGRQVEFAKSYEETDPATPVFFILSPGVDPLKDVEALGKKLGFTFDNNNFHNVSLGQGQEIVAEQCMDLAAKEGHWVILQNIHLVAKWLSTLEKKLEQYSIGSHESYRVYMSAEPAGSPESHIIPQGILESSIKITNEPPTGMFANLHKALYNFNQDTLEMCAREAEFKVILFALCYFHAVVCERQKFGPQGWNRSYPFNTGDLTISVNVLYNYLEANSKVPWQDLRYLFGEIMYGGHITDDWDRRLCRTYLEEYMAPEMLDGDLYLAPGFPVPPNSDYKGYHQYIDEILPPESPYLYGLHPNAEIGFLTTESDNLFKVVLELQPRDAGGGGGGGSSREEKIKSLLDEIVEKLPEEFNMMEIMGKVEDRTPYVVVAFQECERMNTLTSEIRRSLKELDLGLKGELTITPDMEDLSNALFLDQIPASWVKRAYPSLFGLSAWYADLLQRIKELEQWTADFALPNVVWLGGFFNPQSFLTAIMQSMARKNEWPLDKMCLQCDVTKKNKEDFSSAPREGSYVHGLFMEGARWDTQTNMIADARLKELAPNMPVIFIKAIPVDKQDTRNIYECPVYKTKQRGPTFVWTFNLKSKEKAAKWTLAGVALLLQV.

Positions 1 to 1813 (MGDVVDARLD…YANICDAQFK (1813 aa)) are stem. 154 to 161 (AGQVKGKT) is a binding site for ATP. Coiled coils occupy residues 482 to 502 (QEFL…DRRL), 627 to 643 (QKYE…EQKV), 734 to 805 (VLEV…WTKQ), 1036 to 1056 (TLDQ…EADE), 1306 to 1337 (WLEI…AWDA), and 1443 to 1468 (LLKS…MTSK). AAA regions lie at residues 1814 to 2035 (YSYE…VLVV), 2095 to 2316 (KVVK…IRFK), 2422 to 2669 (ELDP…VFQG), and 2767 to 3016 (TYNE…ERRY). ATP is bound by residues 1852–1859 (GPAGTGKT), 2133–2140 (GNAGTGKS), 2460–2467 (GNAGLGKS), and 2805–2812 (GVGGSGKQ). Coiled-coil stretches lie at residues 3033–3134 (SLLA…AKAE), 3263–3325 (EPKR…SRTI), and 3573–3642 (QERP…EEAK). The interval 3033–3325 (SLLAMKSKEL…QEAEATSRTI (293 aa)) is stalk. AAA regions lie at residues 3409-3636 (LTDD…EISV) and 3846-4072 (VRNF…VLYN).

The protein belongs to the dynein heavy chain family. As to quaternary structure, consists of at least two heavy chains (alpha and beta), three intermediate chains and several light chains.

It localises to the cell projection. The protein resides in the cilium. The protein localises to the flagellum. Its subcellular location is the cytoplasm. It is found in the cytoskeleton. It localises to the flagellum axoneme. Its function is as follows. Force generating protein of eukaryotic cilia and flagella. Produces force towards the minus ends of microtubules. Dynein has ATPase activity; the force-producing power stroke is thought to occur on release of ADP. This chain is Dynein beta chain, ciliary, found in Heliocidaris crassispina (Sea urchin).